Reading from the N-terminus, the 201-residue chain is Ribonuclease HII (201 aa).

One can recognise an RNase H type-2 domain in the interval Leu-10–Ser-200. Residues Asp-16, Glu-17, and Asp-108 each coordinate a divalent metal cation.

Belongs to the RNase HII family. Requires Mn(2+) as cofactor. It depends on Mg(2+) as a cofactor.

Its subcellular location is the cytoplasm. The enzyme catalyses Endonucleolytic cleavage to 5'-phosphomonoester.. Its function is as follows. Endonuclease that specifically degrades the RNA of RNA-DNA hybrids. The protein is Ribonuclease HII of Bacteroides fragilis (strain ATCC 25285 / DSM 2151 / CCUG 4856 / JCM 11019 / LMG 10263 / NCTC 9343 / Onslow / VPI 2553 / EN-2).